The sequence spans 253 residues: Hydroxyacylglutathione hydrolase (253 aa).

Residues histidine 59, histidine 61, aspartate 63, histidine 64, histidine 118, aspartate 143, and histidine 181 each coordinate Zn(2+).

It belongs to the metallo-beta-lactamase superfamily. Glyoxalase II family. In terms of assembly, monomer. The cofactor is Zn(2+).

The catalysed reaction is an S-(2-hydroxyacyl)glutathione + H2O = a 2-hydroxy carboxylate + glutathione + H(+). It functions in the pathway secondary metabolite metabolism; methylglyoxal degradation; (R)-lactate from methylglyoxal: step 2/2. In terms of biological role, thiolesterase that catalyzes the hydrolysis of S-D-lactoyl-glutathione to form glutathione and D-lactic acid. This is Hydroxyacylglutathione hydrolase from Prochlorococcus marinus (strain SARG / CCMP1375 / SS120).